A 273-amino-acid polypeptide reads, in one-letter code: Ribosomal RNA small subunit methyltransferase A (273 aa).

6 residues coordinate S-adenosyl-L-methionine: Asn18, Leu20, Gly45, Glu66, Asp91, and Asn113.

Belongs to the class I-like SAM-binding methyltransferase superfamily. rRNA adenine N(6)-methyltransferase family. RsmA subfamily.

It localises to the cytoplasm. The catalysed reaction is adenosine(1518)/adenosine(1519) in 16S rRNA + 4 S-adenosyl-L-methionine = N(6)-dimethyladenosine(1518)/N(6)-dimethyladenosine(1519) in 16S rRNA + 4 S-adenosyl-L-homocysteine + 4 H(+). Specifically dimethylates two adjacent adenosines (A1518 and A1519) in the loop of a conserved hairpin near the 3'-end of 16S rRNA in the 30S particle. May play a critical role in biogenesis of 30S subunits. This chain is Ribosomal RNA small subunit methyltransferase A, found in Enterobacter sp. (strain 638).